Reading from the N-terminus, the 571-residue chain is Adenine deaminase (571 aa).

It belongs to the metallo-dependent hydrolases superfamily. Adenine deaminase family. Requires Mn(2+) as cofactor.

It catalyses the reaction adenine + H2O + H(+) = hypoxanthine + NH4(+). This Dehalococcoides mccartyi (strain ATCC BAA-2266 / KCTC 15142 / 195) (Dehalococcoides ethenogenes (strain 195)) protein is Adenine deaminase.